The sequence spans 206 residues: Pyridoxine/pyridoxamine 5'-phosphate oxidase (206 aa).

FMN contacts are provided by residues 49–54 (RMVLLK), 69–70 (YT), Lys76, and Gln98. Position 54 (Lys54) interacts with substrate. Substrate is bound by residues Tyr116, Arg120, and Ser124. FMN is bound by residues 133 to 134 (QS) and Trp177. Residue 183 to 185 (RLH) participates in substrate binding. Arg187 provides a ligand contact to FMN.

This sequence belongs to the pyridoxamine 5'-phosphate oxidase family. In terms of assembly, homodimer. FMN serves as cofactor.

It carries out the reaction pyridoxamine 5'-phosphate + O2 + H2O = pyridoxal 5'-phosphate + H2O2 + NH4(+). It catalyses the reaction pyridoxine 5'-phosphate + O2 = pyridoxal 5'-phosphate + H2O2. It participates in cofactor metabolism; pyridoxal 5'-phosphate salvage; pyridoxal 5'-phosphate from pyridoxamine 5'-phosphate: step 1/1. The protein operates within cofactor metabolism; pyridoxal 5'-phosphate salvage; pyridoxal 5'-phosphate from pyridoxine 5'-phosphate: step 1/1. Catalyzes the oxidation of either pyridoxine 5'-phosphate (PNP) or pyridoxamine 5'-phosphate (PMP) into pyridoxal 5'-phosphate (PLP). This Jannaschia sp. (strain CCS1) protein is Pyridoxine/pyridoxamine 5'-phosphate oxidase.